The sequence spans 88 residues: MASLGSSAGGRRPTVLLQIALFVVVAAIIINSSVCLGATAVHDAAASGTGALDPNVPAVPTPGGAGQPYTGRGCRTVYGCRPPAGGQP.

Topologically, residues 1–13 (MASLGSSAGGRRP) are cytoplasmic. Residues 14 to 35 (TVLLQIALFVVVAAIIINSSVC) traverse the membrane as a helical segment. At 36–88 (LGATAVHDAAASGTGALDPNVPAVPTPGGAGQPYTGRGCRTVYGCRPPAGGQP) the chain is on the extracellular side.

It is found in the membrane. Functionally, associated with pathogen defense. This is Protein WIR1A (WIR1A) from Triticum aestivum (Wheat).